The chain runs to 285 residues: Secreted RxLR effector protein 106 (285 aa).

The first 24 residues, 1 to 24 (MSVRYAGLLLAAVAVSAHINEVNS), serve as a signal peptide directing secretion. Positions 42-54 (RDLRSADNGNEER) match the RxLR-dEER motif. N-linked (GlcNAc...) asparagine glycans are attached at residues Asn182 and Asn187. The span at 220-229 (IEGDKEKKGG) shows a compositional bias: basic and acidic residues. The interval 220–262 (IEGDKEKKGGPDYVEGTESRGKKRGQTEAPDLEPGLTPKQKRL) is disordered. Residues 239–264 (RGKKRGQTEAPDLEPGLTPKQKRLKR) carry the Bipartite nuclear localization signal motif.

The protein belongs to the RxLR effector family. In terms of assembly, interacts with host RCD1 and SRO1 transcription co-regulators.

The protein resides in the secreted. It localises to the host nucleus. In terms of biological role, secreted effector that suppresses pathogen-associated molecular pattern (PAMP)-triggered immunity (PTI) in host plants. Binds to RCD1 and SRO1 transcription co-regulators to attenuate transcriptional activation of salicylic acid (SA)-induced defense genes and alters plant growth responses to light. Suppresses SA signal transduction but not SA levels. This Hyaloperonospora arabidopsidis (strain Emoy2) (Downy mildew agent) protein is Secreted RxLR effector protein 106.